The chain runs to 277 residues: Shikimate dehydrogenase (NADP(+)) (277 aa).

Shikimate contacts are provided by residues 15–17 (SLS) and Thr-62. Lys-66 (proton acceptor) is an active-site residue. Positions 87 and 102 each coordinate shikimate. NADP(+)-binding positions include 127 to 131 (GAGGA), 151 to 156 (NRTVDK), and Ile-219. A shikimate-binding site is contributed by Tyr-221. Gly-242 contributes to the NADP(+) binding site.

The protein belongs to the shikimate dehydrogenase family. In terms of assembly, homodimer.

The enzyme catalyses shikimate + NADP(+) = 3-dehydroshikimate + NADPH + H(+). Its pathway is metabolic intermediate biosynthesis; chorismate biosynthesis; chorismate from D-erythrose 4-phosphate and phosphoenolpyruvate: step 4/7. In terms of biological role, involved in the biosynthesis of the chorismate, which leads to the biosynthesis of aromatic amino acids. Catalyzes the reversible NADPH linked reduction of 3-dehydroshikimate (DHSA) to yield shikimate (SA). This is Shikimate dehydrogenase (NADP(+)) from Bacillus cereus (strain ZK / E33L).